Here is a 78-residue protein sequence, read N- to C-terminus: Small ribosomal subunit protein bS21A (78 aa).

The span at 30–52 (MKARSAYEKPSEKRAREKGEAVR) shows a compositional bias: basic and acidic residues. The segment at 30–78 (MKARSAYEKPSEKRAREKGEAVRRQRKLARKKLQREGLLPAPKKAVRAR) is disordered. Residues 53–62 (RQRKLARKKL) show a composition bias toward basic residues.

The protein belongs to the bacterial ribosomal protein bS21 family.

The sequence is that of Small ribosomal subunit protein bS21A from Rhizobium etli (strain ATCC 51251 / DSM 11541 / JCM 21823 / NBRC 15573 / CFN 42).